Reading from the N-terminus, the 462-residue chain is Glycoprotein endo-alpha-1,2-mannosidase (462 aa).

The Cytoplasmic portion of the chain corresponds to 1–9 (MAKFRRRTC). The helical; Signal-anchor for type II membrane protein transmembrane segment at 10-30 (IILSLFIVFIFSLMMGLKMLW) threads the bilayer. At 31–462 (PNAASFGPPF…YALDQQLPAS (432 aa)) the chain is on the lumenal side. The catalytic stretch occupies residues 60-462 (DFQRSDRIDM…YALDQQLPAS (403 aa)).

The protein belongs to the glycosyl hydrolase 99 family. Undergoes proteolytic cleavage in the C-terminal region. Highly expressed in the liver and kidney.

It is found in the golgi apparatus membrane. The enzyme catalyses N-{alpha-Glc-(1-&gt;3)-alpha-Man-(1-&gt;2)-alpha-Man-(1-&gt;2)-alpha-Man-(1-&gt;3)-[alpha-Man-(1-&gt;2)-alpha-Man-(1-&gt;3)-[alpha-Man-(1-&gt;2)-alpha-Man-(1-&gt;6)]-alpha-Man-(1-&gt;6)]-beta-Man-(1-&gt;4)-beta-GlcNAc-(1-&gt;4)-beta-GlcNAc}-L-asparaginyl-[protein] + H2O = alpha-D-glucosyl-(1-&gt;3)-D-mannopyranose + N(4)-{alpha-D-Man-(1-&gt;2)-alpha-D-Man-(1-&gt;3)-[alpha-D-Man-(1-&gt;2)-alpha-D-Man-(1-&gt;3)-[alpha-D-Man-(1-&gt;2)-alpha-D-Man-(1-&gt;6)]-alpha-D-Man-(1-&gt;6)]-beta-D-Man-(1-&gt;4)-beta-D-GlaNAc-(1-&gt;4)-beta-D-GlcNAc}-L-asparaginyl-[protein] (N-glucan mannose isomer 8A1,2,3B1,2). This chain is Glycoprotein endo-alpha-1,2-mannosidase (Manea), found in Rattus norvegicus (Rat).